The following is a 1690-amino-acid chain: Lysine-specific demethylase 5A (1690 aa).

Positions 19–60 (CPVFEPSWEEFTDPLSFIGRIRPLAEKTGICKIRPPKDWQPP) constitute a JmjN domain. The ARID domain occupies 84–174 (TRVRLDFLDQ…ILYPYELFQS (91 aa)). Lys-191 is covalently cross-linked (Glycyl lysine isopeptide (Lys-Gly) (interchain with G-Cter in SUMO2)). The residue at position 204 (Ser-204) is a Phosphoserine. Residues 293–343 (LYVCMFCGRGNNEDKLLLCDGCDDSYHTFCLIPPLPDVPKGDWRCPKCVAE) form a PHD-type 1 zinc finger. Tyr-409 is a binding site for 2-oxoglutarate. The GSGFP motif motif lies at 419–423 (GSGFP). Positions 437–603 (EYALSGWNLN…IGRQCVNHYR (167 aa)) constitute a JmjC domain. Residues His-483 and Glu-485 each coordinate Fe cation. The 2-oxoglutarate site is built by Ser-491, Asn-493, and Lys-501. His-571 lines the Fe cation pocket. The C5HC2 zinc finger occupies 676 to 728 (CSACRTTCFLSALTCSCNPERLVCLYHPTDLCPCPMQKKCLRYRYPLEDLPSL). A Glycyl lysine isopeptide (Lys-Gly) (interchain with G-Cter in SUMO2) cross-link involves residue Lys-1007. At Ser-1111 the chain carries Phosphoserine. The PHD-type 2 zinc finger occupies 1161 to 1218 (VKFCICRKTASGFMLQCELCKDWFHNSCVPLPKSSSQKKGSSWQAKEVKFLCPLCMRS). Disordered stretches follow at residues 1327-1348 (SVSSSPRQTMDYDDEETDSDED) and 1407-1433 (KSCSQGSSTPRKQPRKSPLVPRSLEPP). Residues Ser-1330 and Ser-1331 each carry the phosphoserine modification. Residues 1337–1348 (DYDDEETDSDED) show a composition bias toward acidic residues. Thr-1343 carries the phosphothreonine modification. At Ser-1345 the chain carries Phosphoserine. 2 positions are modified to phosphoserine: Ser-1438 and Ser-1488. 2 stretches are compositionally biased toward basic and acidic residues: residues 1490-1503 (EEKPLKVKGKDSSE) and 1520-1530 (GKQKSKELKKM). 2 disordered regions span residues 1490-1509 (EEKPLKVKGKDSSEKKRKRK) and 1516-1543 (LFGEGKQKSKELKKMDKPRKKKLKLGAD). Tyr-1595 is modified (phosphotyrosine). A phosphoserine mark is found at Ser-1598 and Ser-1603. A PHD-type 3 zinc finger spans residues 1607-1661 (NAVCAAQNCQRPCKDKVDWVQCDGGCDEWFHQVCVGVSPEMAENEDYICINCAKK). An interaction with LMO2 region spans residues 1623–1690 (VDWVQCDGGC…LPMEDLKETS (68 aa)). Ser-1666 is subject to Phosphoserine.

It belongs to the JARID1 histone demethylase family. Interacts with SUZ12; the interaction is direct. Interacts with the viral protein-binding domain of RB1. Interacts with ESR1, MYC, MYCN and LMO2. Interacts with HDAC1; this interaction impairs histone deacetylation by HDAC1. Interacts with BMAL1 and CLOCK. Interacts (via PHD-type 1 zinc finger) with histone H3 unmodified at 'Lys-4' and (via PHD-type 3 zinc finger) with histone H3 di- and trimethylated at 'Lys-4'. Fe(2+) is required as a cofactor.

Its subcellular location is the nucleus. It is found in the nucleolus. The catalysed reaction is N(6),N(6),N(6)-trimethyl-L-lysyl(4)-[histone H3] + 3 2-oxoglutarate + 3 O2 = L-lysyl(4)-[histone H3] + 3 formaldehyde + 3 succinate + 3 CO2. The inhibitors KDOAM-25, CPI-455 and others inhibits its demethylase activity, resulting to cell growth arrest in cancer cells. In terms of biological role, histone demethylase that specifically demethylates 'Lys-4' of histone H3, thereby playing a central role in histone code. Does not demethylate histone H3 'Lys-9', H3 'Lys-27', H3 'Lys-36', H3 'Lys-79' or H4 'Lys-20'. Demethylates trimethylated and dimethylated but not monomethylated H3 'Lys-4'. Regulates specific gene transcription through DNA-binding on 5'-CCGCCC-3' motif. May stimulate transcription mediated by nuclear receptors. Involved in transcriptional regulation of Hox proteins during cell differentiation. May participate in transcriptional repression of cytokines such as CXCL12. Plays a role in the regulation of the circadian rhythm and in maintaining the normal periodicity of the circadian clock. In a histone demethylase-independent manner, acts as a coactivator of the CLOCK-BMAL1-mediated transcriptional activation of PER1/2 and other clock-controlled genes and increases histone acetylation at PER1/2 promoters by inhibiting the activity of HDAC1. Seems to act as a transcriptional corepressor for some genes such as MT1F and to favor the proliferation of cancer cells. The protein is Lysine-specific demethylase 5A of Homo sapiens (Human).